A 175-amino-acid chain; its full sequence is Endoribonuclease YbeY (175 aa).

The Zn(2+) site is built by histidine 129, histidine 133, and histidine 139.

Belongs to the endoribonuclease YbeY family. It depends on Zn(2+) as a cofactor.

It is found in the cytoplasm. Single strand-specific metallo-endoribonuclease involved in late-stage 70S ribosome quality control and in maturation of the 3' terminus of the 16S rRNA. The polypeptide is Endoribonuclease YbeY (Lactobacillus gasseri (strain ATCC 33323 / DSM 20243 / BCRC 14619 / CIP 102991 / JCM 1131 / KCTC 3163 / NCIMB 11718 / NCTC 13722 / AM63)).